An 87-amino-acid polypeptide reads, in one-letter code: uncharacterized protein (87 aa).

Positions 1 to 19 (MLVLQLAVLVTAVYAFVHA) are cleaved as a signal peptide. The chain crosses the membrane as a helical span at residues 51-71 (ILGFVFGVLGIVIAACAAGVY).

The protein to M.tuberculosis Rv0476.

It localises to the membrane. This is an uncharacterized protein from Mycobacterium leprae (strain TN).